The primary structure comprises 689 residues: MATKTAGVGRWEVVKKGRRPGVGAGAGGRGGGRNRRALGEANGVWKYDLTPAIQTTSTLYERGFENIMKRQNKEQVPPPAVEPKKPGNKKQPKKVATPPNQNQKQGRFRSLEEALKALDVADLQKELDKSQSVFSGNPSIWLKDLASYLNYKLQAPLSEPTLSQHTHDYPYSLVSRELRGIIRGLLAKAAGSLELFFDHCLFTMLQELDKTPGESLHGYRICIQAILQDKPKIATANLGKFLELLRSHQSRPAKCLTIMWALGQAGFANLTEGLKVWLGIMLPVLGIKSLSPFAITYLDRLLLMHPNLTKGFGMIGPKDFFPLLDFAYMPNNSLTPSLQEQLCQLYPRLKVLAFGAKPDSTLHTYFPSFLSRATPSCPPEMKKELLSSLTECLTVDPLSASVWRQLYPKHLSQSSLLLEHLLSSWEQIPKKVQKSLQETIQSLKLTNQELLRKGSSNNQDVVTCDMACKGLLQQVQGPRLPWTRLLLLLLVFAVGFLCHDLRSHSSFQASLTGRLLRSSGFLPASQQACAKLYSYSLQGYSWLGETLPLWGSHLLTVVRPSLQLAWAHTNATVSFLSAHCASHLAWFGDSLTSLSQRLQIQLPDSVNQLLRYLRELPLLFHQNVLLPLWHLLLEALAWAQEHCHEACRGEVTWDCMKTQLSEAVHWTWLCLQDITVAFLDWALALISQQ.

2 disordered regions span residues 1-37 and 70-107; these read MATKTAGVGRWEVVKKGRRPGVGAGAGGRGGGRNRRA and RQNKEQVPPPAVEPKKPGNKKQPKKVATPPNQNQKQGR. Ala-2 bears the N-acetylalanine mark. Over residues 20-31 the composition is skewed to gly residues; sequence PGVGAGAGGRGG. 2 N-linked (GlcNAc...) asparagine glycosylation sites follow: Asn-269 and Asn-307. The next 2 helical transmembrane spans lie at 480-500 and 616-636; these read LPWTRLLLLLLVFAVGFLCHD and LPLLFHQNVLLPLWHLLLEAL.

The protein belongs to the TMEM214 family. Constitutively interacts with CASP4; required for the localization of procaspase 4 to the ER.

It is found in the endoplasmic reticulum membrane. Functionally, critical mediator, in cooperation with CASP4, of endoplasmic reticulum-stress induced apoptosis. Required or the activation of CASP4 following endoplasmic reticulum stress. The protein is Transmembrane protein 214 (TMEM214) of Homo sapiens (Human).